We begin with the raw amino-acid sequence, 346 residues long: Phosphoribosylformylglycinamidine cyclo-ligase (346 aa).

This sequence belongs to the AIR synthase family.

Its subcellular location is the cytoplasm. It catalyses the reaction 2-formamido-N(1)-(5-O-phospho-beta-D-ribosyl)acetamidine + ATP = 5-amino-1-(5-phospho-beta-D-ribosyl)imidazole + ADP + phosphate + H(+). It functions in the pathway purine metabolism; IMP biosynthesis via de novo pathway; 5-amino-1-(5-phospho-D-ribosyl)imidazole from N(2)-formyl-N(1)-(5-phospho-D-ribosyl)glycinamide: step 2/2. The protein is Phosphoribosylformylglycinamidine cyclo-ligase of Bacillus mycoides (strain KBAB4) (Bacillus weihenstephanensis).